Here is a 397-residue protein sequence, read N- to C-terminus: (S)-8-oxocitronellyl enol synthase ISY2 (397 aa).

Residues 36–38 (TGL), 64–65 (RR), 82–83 (DV), 106–107 (TW), Q144, Y180, I207, and 214–216 (SMM) contribute to the NADP(+) site. Residue Y180 is part of the active site.

Belongs to the short-chain dehydrogenases/reductases (SDR) family.

The enzyme catalyses (S)-8-oxocitronellyl enol + NADP(+) = (6E)-8-oxogeranial + NADPH + H(+). It catalyses the reaction (S)-8-oxocitronellyl enol + NAD(+) = (6E)-8-oxogeranial + NADH + H(+). Its function is as follows. Iridoid synthase that catalyzes the first step in generation of the iridoid ring scaffold using the linear monoterpene (6E)-8-oxogeranial as substrate. Iridoids comprise a large family of distinctive bicyclic monoterpenes that possess a wide range of pharmacological activities, including anticancer, anti-inflammatory, antifungal and antibacterial activities. Catalyzes the conversion of the linear monoterpene (6E)-8-oxogeranial to (S)-8-oxocitronellyl enol, a precursor of nepetalactones, which are metabolites that are both insect-repellent and have euphoric effect in cats. In Nepeta cataria (Catnip), this protein is (S)-8-oxocitronellyl enol synthase ISY2.